The chain runs to 1269 residues: Myb-binding protein 1A-like protein (1269 aa).

Residues 708 to 783 (DPNKDEDESG…EEDEAMEEGQ (76 aa)) are disordered. Residues 721–730 (TDDKKRKLKE) show a composition bias toward basic and acidic residues. The span at 731–783 (EDEDDDDEEEDDDNDEGDDDDDDDDEEEGGEEGEESSDSSDDEEEDEAMEEGQ) shows a compositional bias: acidic residues. Residue Ser810 is modified to Phosphoserine. Positions 1163-1269 (VKKVPEAEQT…KKKKKGADGE (107 aa)) are disordered. Positions 1177–1195 (KKKKGFLPETKKRKNRKKP) are enriched in basic residues. The segment covering 1199–1211 (EGKETETPVEKTP) has biased composition (basic and acidic residues). Composition is skewed to basic residues over residues 1221-1232 (NKNKKKNKKRKQ) and 1256-1269 (KQKKKKKKKGADGE).

The protein belongs to the MYBBP1A family.

It is found in the nucleus. The protein resides in the nucleolus. May activate or repress transcription via interactions with sequence specific DNA-binding proteins. May play a role in the repression of the circadian clock gene expression. This Danio rerio (Zebrafish) protein is Myb-binding protein 1A-like protein (mybbp1a).